The sequence spans 443 residues: ATP-dependent protease ATPase subunit HslU (443 aa).

ATP-binding positions include Ile-18 and 60-65; that span reads GVGKTE. Residues 137 to 156 form a disordered region; it reads PPPRDAWGQNEQSEDTSNTR. A compositionally biased stretch (polar residues) spans 145-156; the sequence is QNEQSEDTSNTR. Residues Asp-256, Glu-321, and Arg-393 each coordinate ATP.

The protein belongs to the ClpX chaperone family. HslU subfamily. A double ring-shaped homohexamer of HslV is capped on each side by a ring-shaped HslU homohexamer. The assembly of the HslU/HslV complex is dependent on binding of ATP.

The protein resides in the cytoplasm. Its function is as follows. ATPase subunit of a proteasome-like degradation complex; this subunit has chaperone activity. The binding of ATP and its subsequent hydrolysis by HslU are essential for unfolding of protein substrates subsequently hydrolyzed by HslV. HslU recognizes the N-terminal part of its protein substrates and unfolds these before they are guided to HslV for hydrolysis. The polypeptide is ATP-dependent protease ATPase subunit HslU (Vibrio vulnificus (strain YJ016)).